The chain runs to 460 residues: Argininosuccinate lyase (460 aa).

This sequence belongs to the lyase 1 family. Argininosuccinate lyase subfamily.

It is found in the cytoplasm. The enzyme catalyses 2-(N(omega)-L-arginino)succinate = fumarate + L-arginine. Its pathway is amino-acid biosynthesis; L-arginine biosynthesis; L-arginine from L-ornithine and carbamoyl phosphate: step 3/3. The polypeptide is Argininosuccinate lyase (Streptococcus sanguinis (strain SK36)).